The following is a 297-amino-acid chain: AKT-interacting protein (297 aa).

Residues 1 to 13 (MNLNPFWSMSTNT) are compositionally biased toward polar residues. Positions 1 to 45 (MNLNPFWSMSTNTGRKRSDGEEQSGEQQQQQRASPARPSFGKKQL) are disordered. The span at 25-39 (GEQQQQQRASPARPS) shows a compositional bias: low complexity. Positions 79–227 (YLEYSLLAEF…VVDSVKLCNS (149 aa)) constitute a UBC core domain. Residues 262 to 297 (KRRPEDHHKGLQVSGLSWVKPGSTQPFSKDDNPPQN) form a disordered region.

It belongs to the ubiquitin-conjugating enzyme family. FTS subfamily.

The protein localises to the cytoplasm. It localises to the cell membrane. May function to promote vesicle trafficking and/or fusion. May also regulate apoptosis. This Salmo salar (Atlantic salmon) protein is AKT-interacting protein (aktip).